A 360-amino-acid chain; its full sequence is UDP-arabinopyranose mutase 2 (360 aa).

Val-2 is subject to N-acetylvaline. Residues 110–112 (DDD) carry the DXD motif motif. Arg-158 carries N-linked (Glc...) arginine glycosylation.

It belongs to the RGP family. In terms of assembly, heteromers with RGP1, RGP4 and RGP5. Requires Mn(2+) as cofactor. The cofactor is Mg(2+). Post-translationally, reversibly glycosylated in vitro by UDP-glucose, UDP-xylose and UDP-galactose, but not UDP-mannose. As to expression, predominantly expressed in shoot and root apical meristems. Expressed in epidermal cells of leaves, inflorescence stems and seed coat. Expressed in pollen.

The protein localises to the cytoplasm. The protein resides in the cytosol. It is found in the golgi apparatus. It carries out the reaction UDP-beta-L-arabinofuranose = UDP-beta-L-arabinopyranose. In terms of biological role, UDP-L-arabinose mutase involved in the biosynthesis of cell wall non-cellulosic polysaccharides. Catalyzes the interconvertion of UDP-L-arabinopyranose (UDP-Arap) and UDP-L-arabinofuranose (UDP-Araf) in vitro. Preferentially catalyzes the formation of UDP-Arap from UDP-Araf. At thermodynamic equilibrium in vitro the ratio of the pyranose form over the furanose form is 95:5. Is not active on other UDP-sugars (UDP-Gal, UDP-Xyl, UDP-Glc, GDP-Man and GDP-Fuc). Functions redundantly with RGP2 and is essential for proper cell walls and pollen development. Probably involved in the formation of the pectocellulosic cell wall layer intine. Is probably active as heteromer in vivo. The sequence is that of UDP-arabinopyranose mutase 2 from Arabidopsis thaliana (Mouse-ear cress).